The sequence spans 349 residues: MPMPPDDSALSLLPDHPLAAHNTFGIAARARFAARITQAAQFEALHRDPRLANLPQLVLGGGSNIVFTRDFDGVVLLDEIAGRRVVREDDDAWYVEAGGGENWHAFVAWTLEHGMPGLENLALIPGTVGAAPIQNIGAYGLEMKAYFDSLVAVELATGRRERFDAARCAFGYRDSFFKREGRGRFAIVAVTFRLPKQWMPRLGYADVTRELDARGITPEAATPRDVFDAVVAIRRAKLPDPLVLGNAGSFFKNPVIDAAQFDALRARAPEVVSYPQPDGQVKLAAGWLIDRCGWKGRALGAAAVHDRQALVLVNRGGATGADVLALARAIQADVRAQFGVELEAEPVCL.

One can recognise an FAD-binding PCMH-type domain in the interval 25–197; sequence GIAARARFAA…VAVTFRLPKQ (173 aa). Arg-173 is a catalytic residue. Ser-249 (proton donor) is an active-site residue. The active site involves Glu-345.

The protein belongs to the MurB family. It depends on FAD as a cofactor.

The protein resides in the cytoplasm. It carries out the reaction UDP-N-acetyl-alpha-D-muramate + NADP(+) = UDP-N-acetyl-3-O-(1-carboxyvinyl)-alpha-D-glucosamine + NADPH + H(+). It functions in the pathway cell wall biogenesis; peptidoglycan biosynthesis. Its function is as follows. Cell wall formation. The sequence is that of UDP-N-acetylenolpyruvoylglucosamine reductase from Burkholderia orbicola (strain MC0-3).